The following is a 694-amino-acid chain: Polynucleotide 5'-hydroxyl-kinase NOL9 (694 aa).

At A2 the chain carries N-acetylalanine. A Nucleolar localization signal motif is present at residues R31 to R47. The tract at residues T80–A101 is disordered. Residue G298–S305 participates in ATP binding. The interaction with LAS1L stretch occupies residues F472–Y694. Residue K477 forms a Glycyl lysine isopeptide (Lys-Gly) (interchain with G-Cter in SUMO2) linkage.

This sequence belongs to the Clp1 family. NOL9/GRC3 subfamily. In terms of assembly, interacts with PELP1, WDR18 and SENP3. Interacts with LAS1L to form an ITS2 pre-rRNA endonuclease-kinase complex.

The protein localises to the nucleus. The protein resides in the nucleolus. It catalyses the reaction a 5'-end dephospho-2'-deoxyribonucleoside-DNA + ATP = a 5'-end 5'-phospho-2'-deoxyribonucleoside-DNA + ADP + H(+). The catalysed reaction is a 5'-end dephospho-ribonucleoside-RNA + ATP = a 5'-end 5'-phospho-ribonucleoside-RNA + ADP + H(+). In terms of biological role, polynucleotide kinase that can phosphorylate the 5'-hydroxyl groups of single-stranded and double-stranded RNA and DNA substrates. Involved in rRNA processing and its kinase activity is required for the processing of the 32S precursor into 5.8S and 28S rRNAs, more specifically for the generation of the major 5.8S(S) form. Required for the efficient pre-rRNA processing of internal transcribed spacer 2 (ITS2). Associates with LAS1L to form an ITS2 pre-rRNA endonuclease-kinase complex and is responsible for the transport of this complex into the nucleolus. In Bos taurus (Bovine), this protein is Polynucleotide 5'-hydroxyl-kinase NOL9 (NOL9).